We begin with the raw amino-acid sequence, 777 residues long: 1,4-alpha-glucan branching enzyme GlgB (777 aa).

Residue aspartate 408 is the Nucleophile of the active site. The Proton donor role is filled by glutamate 461.

It belongs to the glycosyl hydrolase 13 family. GlgB subfamily. As to quaternary structure, monomer.

The enzyme catalyses Transfers a segment of a (1-&gt;4)-alpha-D-glucan chain to a primary hydroxy group in a similar glucan chain.. It participates in glycan biosynthesis; glycogen biosynthesis. Functionally, catalyzes the formation of the alpha-1,6-glucosidic linkages in glycogen by scission of a 1,4-alpha-linked oligosaccharide from growing alpha-1,4-glucan chains and the subsequent attachment of the oligosaccharide to the alpha-1,6 position. The sequence is that of 1,4-alpha-glucan branching enzyme GlgB from Actinobacillus pleuropneumoniae serotype 5b (strain L20).